We begin with the raw amino-acid sequence, 956 residues long: Nitrogen regulatory protein NUT1 (956 aa).

Positions 1–12 are enriched in basic and acidic residues; it reads MNPTITEHDFRF. Disordered stretches follow at residues 1–51, 120–222, 240–262, 348–373, and 524–661; these read MNPT…NDAQ, QQEE…PAAA, KTSI…FQVP, GQSI…SQVS, and TLPG…DAPT. Residues 15–37 are compositionally biased toward low complexity; it reads RPAAPGRDPGSDSSDDPLPASLR. 4 stretches are compositionally biased toward polar residues: residues 42-51, 131-153, 167-194, and 208-217; these read DRQSAFNDAQ, PLKT…QKKS, SHGS…NAIS, and AAQSQFNPQS. The span at 588–613 shows a compositional bias: polar residues; sequence NASTTAIPNSQMQYEQQGVQGHTNSP. 2 stretches are compositionally biased toward low complexity: residues 623–633 and 640–661; these read SGFSSVVHSRP and SKNG…DAPT. The GATA-type zinc finger occupies 663 to 687; sequence CTNCATQTTPLWRRNPEGQPLCNAC. Residues 708-890 form a disordered region; that stretch reads KKRNRGSGSN…AATRPSGFGT (183 aa). The span at 713 to 760 shows a compositional bias: polar residues; the sequence is GSGSNVPGATSGSRSKKGATSTAVSGTNTRKNSSLAISRTASTTNVQV. The span at 812 to 839 shows a compositional bias: low complexity; the sequence is VVPIAAAPPKNMPGPGAAAAARTVALGP. Composition is skewed to polar residues over residues 849-863 and 872-881; these read SPAN…NANH and PENSTGSNEA.

The protein resides in the nucleus. Its function is as follows. Major nitrogen regulatory protein; activates expression of nitrogen-regulated genes. The protein is Nitrogen regulatory protein NUT1 (NUT1) of Pyricularia oryzae (strain 70-15 / ATCC MYA-4617 / FGSC 8958) (Rice blast fungus).